The chain runs to 297 residues: MVVIANAHNELIHDAVLDYYGKRLATCSSDKTIKIFEVEGETHKLIDTLTGHEGPVWRVDWAHPKFGTILASCSYDGKVLIWKEENGRWSQIAVHAVHSASVNSVQWAPHEYGPLLLVASSDGKVSVVEFKENGTTSPIIIDAHAIGVNSASWAPATIEEDGEHNGTKESRKFVTGGADNLVKIWKYNSDAQTYVLESTLEGHSDWVRDVAWSPTVLLRSYLASVSQDRTCIIWTQDNEQGPWKKTLLKEEKFPDVLWRASWSLSGNVLALSGGDNKVTLWKENLEGKWEPAGEVHQ.

6 WD repeats span residues 7–46, 51–92, 97–138, 143–195, 202–244, and 252–291; these read AHNE…HKLI, GHEG…WSQI, VHSA…TTSP, AHAI…QTYV, GHSD…GPWK, and KFPD…KWEP.

Belongs to the WD repeat SEC13 family. The basic repeat unit of a COPII coated vesicle is composed of 5 proteins: the small GTPase SAR1, the heterodimeric SEC23-SEC24 complex, and the heterotetrameric SEC13-SEC31 complex. This repeat unit polymerizes to induce membrane deformation into a transport vesicle. Component of the nuclear pore complex (NPC). NPC constitutes the exclusive means of nucleocytoplasmic transport. NPCs allow the passive diffusion of ions and small molecules and the active, nuclear transport receptor-mediated bidirectional transport of macromolecules such as proteins, RNAs, ribonucleoparticles (RNPs), and ribosomal subunits across the nuclear envelope. Due to its 8-fold rotational symmetry, all subunits are present with 8 copies or multiples thereof. SEC13 is part of the heptameric 0.5 MDa autoassembling NUP84 NPC subcomplex (NUP84, NUP85, NUP120, NUP133, NUP145C, SEC13 and SEH1). Component of the SEA complex composed of at least IML1/SEA1, RTC1/SEA2, MTC5/SEA3, NPR2, NPR3, SEA4, SEC13 and SEH1.

Its subcellular location is the cytoplasmic vesicle. The protein resides in the COPII-coated vesicle membrane. The protein localises to the endoplasmic reticulum membrane. It localises to the nucleus. It is found in the nuclear pore complex. Its subcellular location is the vacuole membrane. In terms of biological role, functions as a component of the nuclear pore complex (NPC) and the COPII coat. It is one of 5 proteins constituting the COPII coat, which is involved in anterograde (ER to Golgi) double-membrane transport vesicle formation. First the small GTPase SAR1, activated by and binding to the integral ER membrane protein SEC12, exchanges GDP for GTP and recruits the heterodimer SEC23/24, which in turn recruits the heterotetramer SEC13-SEC31. The polymerization of COPII coat complexes then causes physically the deformation (budding) of the membrane, leading to the creation of a transport vesicle. The COPII complex is dissociated upon SAR1-GTP hydrolysis to SAR1-GDP. SEC23 functions as the SAR1 GTPase activating protein, whose activity is stimulated in the presence of SEC13/31. SEC13 is directly or indirectly required for normal ER membrane and nuclear envelope morphology. It also functions as a component of the nuclear pore complex (NPC). NPC components, collectively referred to as nucleoporins (NUPs), can play the role of both NPC structural components and of docking or interaction partners for transiently associated nuclear transport factors. SEC13 is required for efficient mRNA export from the nucleus to the cytoplasm and for correct nuclear pore biogenesis and distribution. Component of the SEA complex which coats the vacuolar membrane and is involved in intracellular trafficking, autophagy, response to nitrogen starvation, and amino acid biogenesis. The protein is Protein transport protein SEC13 (SEC13) of Saccharomyces cerevisiae (strain ATCC 204508 / S288c) (Baker's yeast).